Consider the following 152-residue polypeptide: Protein SprT-like (152 aa).

The SprT-like domain maps to 7–147; it reads QRLVEEVSLQ…CGKCKGKLKP (141 aa). His-67 lines the Zn(2+) pocket. Residue Glu-68 is part of the active site. His-71 contributes to the Zn(2+) binding site.

It belongs to the SprT family. It depends on Zn(2+) as a cofactor.

Its subcellular location is the cytoplasm. This Bacillus cereus (strain ATCC 14579 / DSM 31 / CCUG 7414 / JCM 2152 / NBRC 15305 / NCIMB 9373 / NCTC 2599 / NRRL B-3711) protein is Protein SprT-like.